The primary structure comprises 126 residues: RuBisCO chaperone RbcX (126 aa).

The protein belongs to the RbcX family. In terms of assembly, homodimer. Interacts with the exposed C-terminal peptide of RbcL via its central cleft, contacts a second RbcL monomer via its peripheral polar surface.

The protein localises to the carboxysome. Its subcellular location is the cytoplasm. Its function is as follows. An RbcL-specific chaperone. Required for assembly of the RbcL8 core. The central cleft of the RbcX homodimer (RbcX2) binds the C-terminus of a RbcL monomer, stabilizing the C-terminus and probably preventing its reassociation with chaperonin GroEL-ES. At the same time the peripheral region of RbcX2 binds a second RbcL monomer, bridging the RbcL homodimers in the correct orientation. The RbcX2(2)-bound RbcL dimers then assemble into the RbcL8 core (RbcL8-(RbcX2)8). RbcS binding triggers the release of RbcX2. This Thermosynechococcus vestitus (strain NIES-2133 / IAM M-273 / BP-1) protein is RuBisCO chaperone RbcX.